The primary structure comprises 133 residues: UPF0292 protein TK1411 (133 aa).

The Toprim domain maps to 20–100; that stretch reads EGALIVEGLR…SVDIETWKEL (81 aa). 3 residues coordinate Mg(2+): Glu-26, Asp-69, and Asp-71.

The protein belongs to the UPF0292 family. It depends on Mg(2+) as a cofactor.

This Thermococcus kodakarensis (strain ATCC BAA-918 / JCM 12380 / KOD1) (Pyrococcus kodakaraensis (strain KOD1)) protein is UPF0292 protein TK1411.